Here is a 218-residue protein sequence, read N- to C-terminus: Probable transaldolase (218 aa).

Residue K87 is the Schiff-base intermediate with substrate of the active site.

This sequence belongs to the transaldolase family. Type 3B subfamily.

The protein resides in the cytoplasm. The catalysed reaction is D-sedoheptulose 7-phosphate + D-glyceraldehyde 3-phosphate = D-erythrose 4-phosphate + beta-D-fructose 6-phosphate. It functions in the pathway carbohydrate degradation; pentose phosphate pathway; D-glyceraldehyde 3-phosphate and beta-D-fructose 6-phosphate from D-ribose 5-phosphate and D-xylulose 5-phosphate (non-oxidative stage): step 2/3. Functionally, transaldolase is important for the balance of metabolites in the pentose-phosphate pathway. The chain is Probable transaldolase from Bacteroides thetaiotaomicron (strain ATCC 29148 / DSM 2079 / JCM 5827 / CCUG 10774 / NCTC 10582 / VPI-5482 / E50).